Reading from the N-terminus, the 170-residue chain is N-alpha-acetyltransferase 50 (170 aa).

The N-acetyltransferase domain occupies 6–155 (IELGDVTPHN…DAHVLQKNLK (150 aa)). Tyrosine 31 contributes to the substrate binding site. Residue tyrosine 73 is part of the active site. A substrate-binding site is contributed by methionine 75. Residue 77–90 (LGCLAPYRRLGIGT) coordinates acetyl-CoA. 79 to 90 (CLAPYRRLGIGT) is a binding site for CoA. Histidine 112 is a catalytic residue. 117–126 (NESAIDFYRK) is a binding site for CoA. The segment at 138 to 141 (YYKR) is substrate.

Belongs to the acetyltransferase family. GNAT subfamily.

It is found in the cytoplasm. Its subcellular location is the nucleus. The catalysed reaction is N-terminal L-methionyl-L-alanyl-[protein] + acetyl-CoA = N-terminal N(alpha)-acetyl-L-methionyl-L-alanyl-[protein] + CoA + H(+). It carries out the reaction N-terminal L-methionyl-L-seryl-[protein] + acetyl-CoA = N-terminal N(alpha)-acetyl-L-methionyl-L-seryl-[protein] + CoA + H(+). It catalyses the reaction N-terminal L-methionyl-L-valyl-[protein] + acetyl-CoA = N-terminal N(alpha)-acetyl-L-methionyl-L-valyl-[protein] + CoA + H(+). The enzyme catalyses N-terminal L-methionyl-L-threonyl-[protein] + acetyl-CoA = N-terminal N(alpha)-acetyl-L-methionyl-L-threonyl-[protein] + CoA + H(+). The catalysed reaction is N-terminal L-methionyl-L-lysyl-[protein] + acetyl-CoA = N-terminal N(alpha)-acetyl-L-methionyl-L-lysyl-[protein] + CoA + H(+). It carries out the reaction N-terminal L-methionyl-L-leucyl-[protein] + acetyl-CoA = N-terminal N(alpha)-acetyl-L-methionyl-L-leucyl-[protein] + CoA + H(+). It catalyses the reaction N-terminal L-methionyl-L-phenylalanyl-[protein] + acetyl-CoA = N-terminal N(alpha)-acetyl-L-methionyl-L-phenylalanyl-[protein] + CoA + H(+). The enzyme catalyses N-terminal L-methionyl-L-tyrosyl-[protein] + acetyl-CoA = N-terminal N(alpha)-acetyl-L-methionyl-L-tyrosyl-[protein] + CoA + H(+). N-alpha-acetyltransferase that acetylates the N-terminus of proteins that retain their initiating methionine. Has a broad substrate specificity: able to acetylate the initiator methionine of most peptides, except for those with a proline in second position. Also displays N-epsilon-acetyltransferase activity by mediating acetylation of the side chain of specific lysines on proteins. The relevance of N-epsilon-acetyltransferase activity is however unclear. Required for sister chromatid cohesion during mitosis by promoting binding of CDCA5/sororin to cohesin. The sequence is that of N-alpha-acetyltransferase 50 (naa50) from Xenopus laevis (African clawed frog).